Reading from the N-terminus, the 63-residue chain is 2-hydroxymuconate tautomerase (63 aa).

The active-site Proton acceptor; via imino nitrogen is Pro-2.

It belongs to the 4-oxalocrotonate tautomerase family. Homohexamer.

The catalysed reaction is (2Z,4E)-2-hydroxyhexa-2,4-dienedioate = (3E)-2-oxohex-3-enedioate. The protein operates within aromatic compound metabolism; salicylate degradation. Its function is as follows. Catalyzes the ketonization of 2-hydroxymuconate stereoselectively to yield 2-oxo-3-hexenedioate. The polypeptide is 2-hydroxymuconate tautomerase (aphI) (Comamonas testosteroni (Pseudomonas testosteroni)).